The sequence spans 107 residues: uncharacterized protein (107 aa).

Residues 12-32 (IILNIFLALLLVYFIFHCIYG) form a helical membrane-spanning segment.

The protein resides in the membrane. This is an uncharacterized protein from Rickettsia prowazekii (strain Madrid E).